We begin with the raw amino-acid sequence, 416 residues long: Serine hydroxymethyltransferase (416 aa).

(6S)-5,6,7,8-tetrahydrofolate-binding positions include Leu-119 and 123–125 (GHL). Position 228 is an N6-(pyridoxal phosphate)lysine (Lys-228). Glu-243 contributes to the (6S)-5,6,7,8-tetrahydrofolate binding site.

The protein belongs to the SHMT family. As to quaternary structure, homodimer. The cofactor is pyridoxal 5'-phosphate.

The protein resides in the cytoplasm. The catalysed reaction is (6R)-5,10-methylene-5,6,7,8-tetrahydrofolate + glycine + H2O = (6S)-5,6,7,8-tetrahydrofolate + L-serine. It functions in the pathway one-carbon metabolism; tetrahydrofolate interconversion. Its pathway is amino-acid biosynthesis; glycine biosynthesis; glycine from L-serine: step 1/1. Its function is as follows. Catalyzes the reversible interconversion of serine and glycine with tetrahydrofolate (THF) serving as the one-carbon carrier. This reaction serves as the major source of one-carbon groups required for the biosynthesis of purines, thymidylate, methionine, and other important biomolecules. Also exhibits THF-independent aldolase activity toward beta-hydroxyamino acids, producing glycine and aldehydes, via a retro-aldol mechanism. The protein is Serine hydroxymethyltransferase of Desulforapulum autotrophicum (strain ATCC 43914 / DSM 3382 / VKM B-1955 / HRM2) (Desulfobacterium autotrophicum).